Consider the following 348-residue polypeptide: Phospho-2-dehydro-3-deoxyheptonate aldolase, Trp-sensitive (348 aa).

This sequence belongs to the class-I DAHP synthase family.

It carries out the reaction D-erythrose 4-phosphate + phosphoenolpyruvate + H2O = 7-phospho-2-dehydro-3-deoxy-D-arabino-heptonate + phosphate. It participates in metabolic intermediate biosynthesis; chorismate biosynthesis; chorismate from D-erythrose 4-phosphate and phosphoenolpyruvate: step 1/7. In terms of biological role, stereospecific condensation of phosphoenolpyruvate (PEP) and D-erythrose-4-phosphate (E4P) giving rise to 3-deoxy-D-arabino-heptulosonate-7-phosphate (DAHP). This Buchnera aphidicola subsp. Acyrthosiphon pisum (strain APS) (Acyrthosiphon pisum symbiotic bacterium) protein is Phospho-2-dehydro-3-deoxyheptonate aldolase, Trp-sensitive (aroH).